The chain runs to 685 residues: Tyrosinase (685 aa).

Ser2 carries the post-translational modification N-acetylserine. Cu cation is bound by residues His67, His97, His106, His278, His282, and His307. A cross-link (2'-(S-cysteinyl)-histidine (Cys-His)) is located at residues 95–97 (CTH). The propeptide at 409-685 (ANFVENVADR…PCGHGPEDHI (277 aa)) is could be involved in enzyme activation.

This sequence belongs to the tyrosinase family. Cu(2+) is required as a cofactor.

It carries out the reaction 2 L-dopa + O2 = 2 L-dopaquinone + 2 H2O. It catalyses the reaction L-tyrosine + O2 = L-dopaquinone + H2O. Functionally, this is a copper-containing oxidase that functions in the formation of pigments such as melanins and other polyphenolic compounds. The protein is Tyrosinase (T) of Neurospora crassa (strain ATCC 24698 / 74-OR23-1A / CBS 708.71 / DSM 1257 / FGSC 987).